The sequence spans 138 residues: Acidic phospholipase A2 Ts-A6 (138 aa).

An N-terminal signal peptide occupies residues 1 to 16; it reads MRALWIMAVLLLGVEG. 7 cysteine pairs are disulfide-bonded: C42–C131, C44–C60, C59–C111, C65–C138, C66–C104, C73–C97, and C91–C102. Ca(2+)-binding residues include Y43, G45, and G47. H63 is a catalytic residue. Ca(2+) is bound at residue D64. D105 is a catalytic residue.

It depends on Ca(2+) as a cofactor. In terms of tissue distribution, expressed by the venom gland.

It localises to the secreted. It catalyses the reaction a 1,2-diacyl-sn-glycero-3-phosphocholine + H2O = a 1-acyl-sn-glycero-3-phosphocholine + a fatty acid + H(+). Functionally, snake venom phospholipase A2 (PLA2) that shows a moderate inhibition of ADP-induced human platelet aggregation when tested on platelet rich plasma. Exhibits high hydrolytic activities and prefers the anionic micelles (dPPC with deoxycholate) to the zwitterionic micelles (dPPC with Triton X-100). PLA2 catalyzes the calcium-dependent hydrolysis of the 2-acyl groups in 3-sn-phosphoglycerides. This is Acidic phospholipase A2 Ts-A6 from Trimeresurus stejnegeri (Chinese green tree viper).